The chain runs to 445 residues: tRNA-2-methylthio-N(6)-dimethylallyladenosine synthase (445 aa).

Residues 2-117 (QGLYIKSYGC…LPELIVKARK (116 aa)) form the MTTase N-terminal domain. 6 residues coordinate [4Fe-4S] cluster: Cys-11, Cys-47, Cys-80, Cys-157, Cys-161, and Cys-164. One can recognise a Radical SAM core domain in the interval 143–374 (KNQKVSAFIS…QELVHKQQLE (232 aa)). Residues 377-441 (KKMIGETHPV…KNHLTGIIPH (65 aa)) enclose the TRAM domain.

It belongs to the methylthiotransferase family. MiaB subfamily. As to quaternary structure, monomer. The cofactor is [4Fe-4S] cluster.

Its subcellular location is the cytoplasm. It carries out the reaction N(6)-dimethylallyladenosine(37) in tRNA + (sulfur carrier)-SH + AH2 + 2 S-adenosyl-L-methionine = 2-methylsulfanyl-N(6)-dimethylallyladenosine(37) in tRNA + (sulfur carrier)-H + 5'-deoxyadenosine + L-methionine + A + S-adenosyl-L-homocysteine + 2 H(+). In terms of biological role, catalyzes the methylthiolation of N6-(dimethylallyl)adenosine (i(6)A), leading to the formation of 2-methylthio-N6-(dimethylallyl)adenosine (ms(2)i(6)A) at position 37 in tRNAs that read codons beginning with uridine. The chain is tRNA-2-methylthio-N(6)-dimethylallyladenosine synthase from Ehrlichia ruminantium (strain Gardel).